The sequence spans 361 residues: Phospho-N-acetylmuramoyl-pentapeptide-transferase (361 aa).

The next 10 helical transmembrane spans lie at 25–45, 73–93, 98–118, 139–159, 168–188, 200–220, 237–257, 264–284, 289–309, and 339–359; these read RGIL…PAVI, TMGG…WGDL, VWLV…DDWI, IFGL…AAIT, IALP…IVGF, GLAI…AYAS, AGEL…FLWF, VFMG…IAVI, MVLV…IIQV, and VIVR…ATLK.

Belongs to the glycosyltransferase 4 family. MraY subfamily. It depends on Mg(2+) as a cofactor.

The protein resides in the cell inner membrane. It catalyses the reaction UDP-N-acetyl-alpha-D-muramoyl-L-alanyl-gamma-D-glutamyl-meso-2,6-diaminopimeloyl-D-alanyl-D-alanine + di-trans,octa-cis-undecaprenyl phosphate = di-trans,octa-cis-undecaprenyl diphospho-N-acetyl-alpha-D-muramoyl-L-alanyl-D-glutamyl-meso-2,6-diaminopimeloyl-D-alanyl-D-alanine + UMP. The protein operates within cell wall biogenesis; peptidoglycan biosynthesis. Functionally, catalyzes the initial step of the lipid cycle reactions in the biosynthesis of the cell wall peptidoglycan: transfers peptidoglycan precursor phospho-MurNAc-pentapeptide from UDP-MurNAc-pentapeptide onto the lipid carrier undecaprenyl phosphate, yielding undecaprenyl-pyrophosphoryl-MurNAc-pentapeptide, known as lipid I. In Xanthomonas oryzae pv. oryzae (strain MAFF 311018), this protein is Phospho-N-acetylmuramoyl-pentapeptide-transferase.